A 401-amino-acid chain; its full sequence is tRNA pseudouridine synthase Pus10 (401 aa).

In terms of domain architecture, THUMP spans 64 to 195 (ALAKSGHRES…DGSVSVEVMP (132 aa)).

This sequence belongs to the pseudouridine synthase Pus10 family.

The catalysed reaction is uridine(54) in tRNA = pseudouridine(54) in tRNA. It carries out the reaction uridine(55) in tRNA = pseudouridine(55) in tRNA. Functionally, responsible for synthesis of pseudouridine from uracil-54 and uracil-55 in the psi GC loop of transfer RNAs. The polypeptide is tRNA pseudouridine synthase Pus10 (Caldivirga maquilingensis (strain ATCC 700844 / DSM 13496 / JCM 10307 / IC-167)).